Reading from the N-terminus, the 103-residue chain is MYAVIKSGGKQHRVNVDELLKVELLKAEKGETIKIEDVLMVVDGDDYKIGQPVVEGASVEAEVVEHGRGKKIRIVKHKRRKHYHKEQGHRQWYTLLKIKAINV.

This sequence belongs to the bacterial ribosomal protein bL21 family. Part of the 50S ribosomal subunit. Contacts protein L20.

Functionally, this protein binds to 23S rRNA in the presence of protein L20. The chain is Large ribosomal subunit protein bL21 from Psychrobacter sp. (strain PRwf-1).